We begin with the raw amino-acid sequence, 139 residues long: MKLIAASLRRLSLAVLTVLLVVSSFAVFTPSASAETYTVKLGSDKGLLVFEPAKLTIKPGDTVEFLNNKVPPHNVVFDAALNPAKSADLAKSLSHKQLLMSPGQSTSTTFPADAPAGEYTFYCEPHRGAGMVGKITVAG.

The N-terminal stretch at 1-34 (MKLIAASLRRLSLAVLTVLLVVSSFAVFTPSASA) is a signal peptide. The region spanning 35–139 (ETYTVKLGSD…GMVGKITVAG (105 aa)) is the Plastocyanin-like domain. Cu cation-binding residues include His73, Cys123, His126, and Met131.

It belongs to the plastocyanin family. Cu(2+) serves as cofactor.

Its subcellular location is the cellular thylakoid membrane. Functionally, participates in electron transfer between P700 and the cytochrome b6-f complex in photosystem I. In Nostoc sp. (strain PCC 7120 / SAG 25.82 / UTEX 2576), this protein is Plastocyanin (petE).